Reading from the N-terminus, the 369-residue chain is Protein DUF642 L-GALACTONO-1,4-LACTONE-RESPONSIVE GENE 2 (369 aa).

Residues 1 to 19 (MEGVTVVSFFLLFIATAMA) form the signal peptide. Asparagine 125 carries an N-linked (GlcNAc...) asparagine glycan.

In terms of tissue distribution, expressed in roots, seedlings and leaves.

The protein localises to the secreted. Its subcellular location is the cell wall. Involved in the regulation of testa rupture during seed germination. Required during roots and rosettes development. The sequence is that of Protein DUF642 L-GALACTONO-1,4-LACTONE-RESPONSIVE GENE 2 from Arabidopsis thaliana (Mouse-ear cress).